The primary structure comprises 89 residues: Small cysteine-rich protein 1 (89 aa).

The signal sequence occupies residues 1–20; the sequence is MDVRFRLCLFLVILVIVANA. Residues 21–27 constitute a propeptide that is removed on maturation; sequence NVIKEPE.

The protein belongs to the Cnidaria small cysteine-rich protein (SCRiP) family. gamma subfamily. In terms of processing, contains 4 disulfide bonds.

The protein localises to the secreted. Its subcellular location is the nematocyst. In terms of biological role, induces neurotoxic symptoms on zebrafish. Has also been claimed to be implied in calcification, but tests on homolog proteins suggest that proteins of this family have a neurotoxic function and not a calcification function. The protein is Small cysteine-rich protein 1 of Acropora millepora (Staghorn coral).